A 496-amino-acid chain; its full sequence is Probable fatty acyl-CoA reductase 5 (496 aa).

This sequence belongs to the fatty acyl-CoA reductase family. As to expression, expressed in the endodermal cell layer surrounding the central vasculature in roots. Expressed in floral organs of very young unopened buds and receptacle of siliques.

It catalyses the reaction a long-chain fatty acyl-CoA + 2 NADPH + 2 H(+) = a long-chain primary fatty alcohol + 2 NADP(+) + CoA. Functionally, catalyzes the reduction of fatty acyl-CoA to fatty alcohols. Catalyzes specifically the formation of C18:0 fatty alcohol. Provides the fatty alcohols required for synthesis of suberin in roots, seed coat and wound-induced leaf tissue. Provides the fatty alcohols required for synthesis of alkyl hydroxycinnamates in root waxes. The polypeptide is Probable fatty acyl-CoA reductase 5 (Arabidopsis thaliana (Mouse-ear cress)).